Here is a 178-residue protein sequence, read N- to C-terminus: Translation initiation factor IF-3 (178 aa).

Belongs to the IF-3 family. Monomer.

It localises to the cytoplasm. Functionally, IF-3 binds to the 30S ribosomal subunit and shifts the equilibrium between 70S ribosomes and their 50S and 30S subunits in favor of the free subunits, thus enhancing the availability of 30S subunits on which protein synthesis initiation begins. This Ralstonia nicotianae (strain ATCC BAA-1114 / GMI1000) (Ralstonia solanacearum) protein is Translation initiation factor IF-3.